A 21-amino-acid chain; its full sequence is DINGGGATLPQALXQITGVIT.

The protein localises to the secreted. Its function is as follows. Plays a role in adherence of C.albicans to buccal epithelial cells, and in biofilm formation. This Candida albicans (Yeast) protein is Complement receptor 3-related protein.